The primary structure comprises 115 residues: NADH-ubiquinone oxidoreductase chain 3 (115 aa).

Helical transmembrane passes span leucine 3–tryptophan 23, phenylalanine 55–isoleucine 75, and leucine 87–leucine 107.

It belongs to the complex I subunit 3 family. Core subunit of respiratory chain NADH dehydrogenase (Complex I) which is composed of 45 different subunits. Interacts with TMEM186. Interacts with TMEM242.

The protein localises to the mitochondrion inner membrane. It carries out the reaction a ubiquinone + NADH + 5 H(+)(in) = a ubiquinol + NAD(+) + 4 H(+)(out). Core subunit of the mitochondrial membrane respiratory chain NADH dehydrogenase (Complex I) which catalyzes electron transfer from NADH through the respiratory chain, using ubiquinone as an electron acceptor. Essential for the catalytic activity of complex I. In Ornithorhynchus anatinus (Duckbill platypus), this protein is NADH-ubiquinone oxidoreductase chain 3.